The primary structure comprises 1578 residues: Chitinase ChiA (1578 aa).

Positions 1–19 (MKHYYRLLFLLLFPLLASA) are cleaved as a signal peptide. Residues 25 to 466 (KKVVGYYAQW…NQVDTSFGSV (442 aa)) form the GH18 1 domain. A GH18N region spans residues 26 to 446 (KVVGYYAQWS…GGMIWELSQD (421 aa)). Residues 92–93 (DA) and 119–122 (GGWT) contribute to the chitin site. Glu-162 serves as the catalytic Proton donor. Residues Tyr-163, 249–252 (FGYD), and Trp-441 each bind chitin. Residues 485–536 (TDVTVELRNASNAVIQTVVSANGNFAFNNLTSGQNYSLTALKATYTFTPVTL) form the CNA-B domain. Residues 1142 to 1462 (KIILGYAHSW…GLMTWSVNWD (321 aa)) are GH18C. The 342-residue stretch at 1142-1483 (KIILGYAHSW…KAYAAYFASQ (342 aa)) folds into the GH18 2 domain. The active-site Proton donor is the Glu-1264. The tract at residues 1473–1578 (SKAYAAYFAS…KSFKVMNFLN (106 aa)) is CTD.

Belongs to the glycosyl hydrolase 18 family. Chitinase class II subfamily.

It localises to the secreted. It carries out the reaction Random endo-hydrolysis of N-acetyl-beta-D-glucosaminide (1-&gt;4)-beta-linkages in chitin and chitodextrins.. Functionally, major extracellular chitinase, which is essential for chitin utilization. The protein is Chitinase ChiA (chiA) of Flavobacterium johnsoniae (strain ATCC 17061 / DSM 2064 / JCM 8514 / BCRC 14874 / CCUG 350202 / NBRC 14942 / NCIMB 11054 / UW101) (Cytophaga johnsonae).